The chain runs to 39 residues: Anthranilate phosphoribosyltransferase (39 aa).

This sequence belongs to the anthranilate phosphoribosyltransferase family. In terms of assembly, homodimer.

The catalysed reaction is N-(5-phospho-beta-D-ribosyl)anthranilate + diphosphate = 5-phospho-alpha-D-ribose 1-diphosphate + anthranilate. It participates in amino-acid biosynthesis; L-tryptophan biosynthesis; L-tryptophan from chorismate: step 2/5. Functionally, catalyzes the transfer of the phosphoribosyl group of 5-phosphorylribose-1-pyrophosphate (PRPP) to anthranilate to yield N-(5'-phosphoribosyl)-anthranilate (PRA). This Pectobacterium carotovorum (Erwinia carotovora) protein is Anthranilate phosphoribosyltransferase (trpD).